We begin with the raw amino-acid sequence, 144 residues long: Large ribosomal subunit protein uL15 (144 aa).

The disordered stretch occupies residues 20 to 49; the sequence is GRGIGSGLGKTGGRGHKGQKSRSGGFHKVG. Residues 21-31 are compositionally biased toward gly residues; that stretch reads RGIGSGLGKTG.

It belongs to the universal ribosomal protein uL15 family. As to quaternary structure, part of the 50S ribosomal subunit.

In terms of biological role, binds to the 23S rRNA. The polypeptide is Large ribosomal subunit protein uL15 (Neisseria gonorrhoeae (strain ATCC 700825 / FA 1090)).